The sequence spans 1400 residues: Tensin-2 (1400 aa).

Residues 31-79 form a Phorbol-ester/DAG-type zinc finger; the sequence is PHSFREKVFRKKTPVCAVCKVTIDGTGVSCRVCKVATHRKCEAKVTSSC. Phosphothreonine is present on Thr-91. Ser-118 and Ser-120 each carry phosphoserine. Residues 122 to 294 form the Phosphatase tensin-type domain; the sequence is DPLMERRWDL…SYFSGLLSGS (173 aa). Cys-231 (phosphocysteine intermediate) is an active-site residue. The C2 tensin-type domain occupies 299-425; sequence SSPLFLHYVF…ASVEFVFSSS (127 aa). Residues 425 to 444 are disordered; that stretch reads SPEKVKGNTPRNDPSVSVDY. The segment covering 433–444 has biased composition (polar residues); that stretch reads TPRNDPSVSVDY. Ser-455 is subject to Phosphoserine. At Tyr-456 the chain carries Phosphotyrosine. Phosphoserine is present on Ser-466. Position 474 is a phosphothreonine (Thr-474). Phosphoserine is present on Ser-481. Tyr-483 is modified (phosphotyrosine). Residues 488–536 are disordered; sequence RVPRQTPPAPSPELPPPPMLSVSSDSGHSSTLTTEHTAESPGRPPPTAA. The segment covering 492-506 has biased composition (pro residues); sequence QTPPAPSPELPPPPM. Residue Arg-555 is modified to Omega-N-methylarginine. The segment at 809-1114 is disordered; it reads CGSPSEGRGY…DVTQPPEHPL (306 aa). 5 positions are modified to phosphoserine: Ser-820, Ser-825, Ser-830, Ser-832, and Ser-835. Composition is skewed to polar residues over residues 898 to 917 and 929 to 940; these read CSAS…SSPV and TRSPSLAPTQRL. Residue Thr-909 is modified to Phosphothreonine. Ser-931, Ser-941, and Ser-972 each carry phosphoserine. The residue at position 977 (Thr-977) is a Phosphothreonine. 2 positions are modified to phosphoserine: Ser-991 and Ser-1003. Residues 1046–1056 show a composition bias toward pro residues; that stretch reads PEPPQSSPTPA. Positions 1082-1098 are enriched in polar residues; the sequence is SGQQPSPPARSTNQHVT. Ser-1087 is modified (phosphoserine). The SH2 domain maps to 1131 to 1238; that stretch reads WYKPHLSRDQ…SLPCCLRIPS (108 aa). Thr-1173 is modified (phosphothreonine). Residue Ser-1238 is modified to Phosphoserine. The 134-residue stretch at 1266–1399 folds into the PTB domain; it reads ACSVLYLTSV…FITKVLLGQR (134 aa).

It belongs to the PTEN phosphatase protein family. As to quaternary structure, interacts with AXL. Interacts with SYK; leading to its phosphorylation. Interacts with SQSTM1 (via PB1 domain); the interaction leads to sequestration of TNS2 in cytoplasmic aggregates with SQSTM1 and promotes TNS2 ubiquitination and proteasomal degradation. Ubiquitinated following sequestration in cytoplasmic aggregates with SQSTM1, leading to proteasomal degradation. As to expression, in the adult kidney, expressed mainly in glomeruli (at protein level). In the newborn kidney, localizes on the basal surface of podocytes along the glomerular basement membrane and not in endothelial cells. Low expression levels in anabolic skeletal muscles.

The protein localises to the cell junction. It localises to the focal adhesion. Its subcellular location is the cell membrane. It is found in the cytoplasm. The enzyme catalyses O-phospho-L-tyrosyl-[protein] + H2O = L-tyrosyl-[protein] + phosphate. Tyrosine-protein phosphatase which regulates cell motility, proliferation and muscle-response to insulin. Phosphatase activity is mediated by binding to phosphatidylinositol-3,4,5-triphosphate (PtdIns(3,4,5)P3) via the SH2 domain. In muscles and under catabolic conditions, dephosphorylates IRS1 leading to its degradation and muscle atrophy. Negatively regulates PI3K-AKT pathway activation. Dephosphorylates nephrin NPHS1 in podocytes which affects mTORC1 complex activity. Under normal glucose conditions, NPHS1 outcompetes IRS1 for binding to phosphatidylinositol 3-kinase (PI3K) which balances mTORC1 activity but high glucose conditions lead to up-regulation of TNS2, increased NPHS1 dephosphorylation and activation of mTORC1, contributing to podocyte hypertrophy and proteinuria. Required for correct podocyte morphology, podocyte-glomerular basement membrane interaction and integrity of the glomerular filtration barrier. Enhances RHOA activation in the presence of DLC1. Plays a role in promoting DLC1-dependent remodeling of the extracellular matrix. The sequence is that of Tensin-2 (Tns2) from Mus musculus (Mouse).